The following is a 127-amino-acid chain: Glycine cleavage system H protein (127 aa).

One can recognise a Lipoyl-binding domain in the interval 27–109 (TVRVGITHIA…YGEGWLYEVK (83 aa)). K68 bears the N6-lipoyllysine mark.

It belongs to the GcvH family. As to quaternary structure, the glycine cleavage system is composed of four proteins: P, T, L and H. It depends on (R)-lipoate as a cofactor.

The glycine cleavage system catalyzes the degradation of glycine. The H protein shuttles the methylamine group of glycine from the P protein to the T protein. The protein is Glycine cleavage system H protein of Corynebacterium jeikeium (strain K411).